Consider the following 402-residue polypeptide: uncharacterized protein (402 aa).

Residues 1 to 11 lie on the Cytoplasmic side of the membrane; sequence MTPSNYQRTRW. The chain crosses the membrane as a helical span at residues 12–34; that stretch reads LTLIGTIITQFALGSVYTWSLFN. Over 35-43 the chain is Periplasmic; the sequence is GALSAKLDA. The helical transmembrane segment at 44–66 threads the bilayer; the sequence is PVSQVAFSFGLLSLGLAISSSVA. Over 67 to 72 the chain is Cytoplasmic; sequence GKLQER. The chain crosses the membrane as a helical span at residues 73–95; it reads FGVKRVTMASGILLGLGFFLTAH. The Periplasmic portion of the chain corresponds to 96–99; it reads SDNL. The chain crosses the membrane as a helical span at residues 100-122; the sequence is MMLWLSAGVLVGLADGAGYLLTL. Topologically, residues 123–134 are cytoplasmic; it reads SNCVKWFPERKG. Residues 135–154 form a helical membrane-spanning segment; it reads LISAFAIGSYGLGSLGFKFI. The Periplasmic portion of the chain corresponds to 155–168; sequence DTQLLETVGLEKTF. A helical membrane pass occupies residues 169–186; sequence VIWGAIALLMIVFGATLM. The Cytoplasmic segment spans residues 187 to 216; that stretch reads KDAPKQEVKTSNGVVEKDYTLAESMRKPQY. A helical membrane pass occupies residues 217 to 236; it reads WMLAVMFLTACMSGLYVIGV. Residues 237-250 lie on the Periplasmic side of the membrane; it reads AKDIAQSLAHLDVV. A helical membrane pass occupies residues 251–273; that stretch reads SAANAVTVISIANLSGRLVLGIL. Topologically, residues 274 to 279 are cytoplasmic; the sequence is SDKIAR. The chain crosses the membrane as a helical span at residues 280–302; sequence IRVITIGQVISLVGMAALLFAPL. Residues 303–306 lie on the Periplasmic side of the membrane; the sequence is NAVT. A helical membrane pass occupies residues 307 to 329; sequence FFAAIACVAFNFGGTITVFPSLV. Over 330–341 the chain is Cytoplasmic; it reads SEFFGLNNLAKN. Residues 342-364 traverse the membrane as a helical segment; the sequence is YGVIYLGFGIGSICGSIIASLFG. Topologically, residues 365–367 are periplasmic; that stretch reads GFY. Residues 368–387 form a helical membrane-spanning segment; it reads VTFYVIFALLILSLALSTTI. At 388–402 the chain is on the cytoplasmic side; the sequence is RQPEQKMLREAHGSL.

It belongs to the major facilitator superfamily. As to quaternary structure, interacts with BtsS and YpdA.

The protein localises to the cell inner membrane. In terms of biological role, part of a nutrient-sensing regulatory network composed of the two-component regulatory systems BtsS/BtsR and YpdA/YpdB, and their respective target proteins, BtsT and YhjX. This is an uncharacterized protein from Escherichia coli (strain K12).